The primary structure comprises 118 residues: MTSYTFTRELRLLTPAQFKSVFSNPIKASSAEITLLAIPNSEQHPRLGLTVAKRYVKRANQRNRIKRIIRDSFRLNQHDIPHLDIVVLVRNGVMEMENAEINKLIEKLWRKLSRRYNG.

This sequence belongs to the RnpA family. Consists of a catalytic RNA component (M1 or rnpB) and a protein subunit.

It carries out the reaction Endonucleolytic cleavage of RNA, removing 5'-extranucleotides from tRNA precursor.. Its function is as follows. RNaseP catalyzes the removal of the 5'-leader sequence from pre-tRNA to produce the mature 5'-terminus. It can also cleave other RNA substrates such as 4.5S RNA. The protein component plays an auxiliary but essential role in vivo by binding to the 5'-leader sequence and broadening the substrate specificity of the ribozyme. The protein is Ribonuclease P protein component of Shewanella putrefaciens (strain CN-32 / ATCC BAA-453).